The following is a 72-amino-acid chain: Palustrin-2CG1 (72 aa).

The signal sequence occupies residues 1 to 22 (MFTMKKPLLLLFFLGTISLSLC). Positions 23–39 (QEERGADEDDGEMTEEV) are cleaved as a propeptide — removed in mature form. Cysteines 64 and 70 form a disulfide.

In terms of tissue distribution, expressed by the skin glands.

Its subcellular location is the secreted. Its function is as follows. Antimicrobial peptide active against a variety of Gram-positive and some Gram-negative bacterial strains. Has antifungal activity against a slime mold isolate. Has hemolytic activity against human erythrocytes. The polypeptide is Palustrin-2CG1 (Amolops chunganensis (Chungan torrent frog)).